The sequence spans 339 residues: DNA double-strand break repair nuclease NurA (339 aa).

Asp58 and Asp133 together coordinate Mn(2+).

Belongs to the NurA family. As to quaternary structure, homodimer. Forms a complex with HerA. Mn(2+) is required as a cofactor.

With respect to regulation, nuclease activity requires the presence of HerA. Another report shows endo- and exonuclease activity in the absence of HerA; HerA stimulates the exo- but not endonuclease. LhrC-Core (Hel112) inhibits the exonuclease activity of the HerA-NurA complex on ss- and dsDNA, has no effect on the nicking activity of NurA. Endo- and exonuclease activities are inhibited by ATP; ATP may subtract divalent ions from the reaction preventing nuclease activity, HerA can alleviate ATP inhibition. In terms of biological role, involved in DNA double-strand break (DSB) repair. Probably acts with HerA to stimulate resection of the 5' strand and produce the long 3' single-strand that is required for RadA loading. NurA and HerA together stimulate the end-resection of six nucleotides of a linear DNA substrate. Processes linear double-stranded (ds)DNA probes with 3' or 5' single-stranded overhangs or blunt ends. Has endonuclease activity on single-stranded (ss)DNA and nicking activity on dsDNA without HerA as well as 5'- and 3'-exonuclease activity on ssDNA. Binds ssDNA, dsDNA, forked and bubble DNA equally well. This Saccharolobus solfataricus (strain ATCC 35092 / DSM 1617 / JCM 11322 / P2) (Sulfolobus solfataricus) protein is DNA double-strand break repair nuclease NurA.